The chain runs to 311 residues: Dihydroorotate dehydrogenase B (NAD(+)), catalytic subunit (311 aa).

Substrate-binding positions include lysine 52, 76 to 80, and asparagine 133; that span reads NAMGL. An FMN-binding site is contributed by 52-53; that stretch reads KS. Position 133 (asparagine 133) interacts with FMN. Cysteine 136 functions as the Nucleophile in the catalytic mechanism. The FMN site is built by lysine 171 and isoleucine 197. 198–199 provides a ligand contact to substrate; sequence NT. FMN contacts are provided by residues glycine 223, 249–250, and 271–272; these read GG and GS.

It belongs to the dihydroorotate dehydrogenase family. Type 1 subfamily. Heterotetramer of 2 PyrK and 2 PyrD type B subunits. FMN is required as a cofactor.

The protein resides in the cytoplasm. The enzyme catalyses (S)-dihydroorotate + NAD(+) = orotate + NADH + H(+). It functions in the pathway pyrimidine metabolism; UMP biosynthesis via de novo pathway; orotate from (S)-dihydroorotate (NAD(+) route): step 1/1. Its function is as follows. Catalyzes the conversion of dihydroorotate to orotate with NAD(+) as electron acceptor. The protein is Dihydroorotate dehydrogenase B (NAD(+)), catalytic subunit (pyrD) of Methanosarcina acetivorans (strain ATCC 35395 / DSM 2834 / JCM 12185 / C2A).